The primary structure comprises 35 residues: Hemocyanin A chain (35 aa).

It belongs to the tyrosinase family. Hemocyanin subfamily. In terms of tissue distribution, hemolymph.

The protein resides in the secreted. It localises to the extracellular space. Functionally, hemocyanins are copper-containing oxygen carriers occurring freely dissolved in the hemolymph of many mollusks and arthropods. The chain is Hemocyanin A chain from Cherax destructor (Common yabby crayfish).